The chain runs to 267 residues: Ribosomal RNA small subunit methyltransferase A (267 aa).

S-adenosyl-L-methionine is bound by residues His-13, Leu-15, Gly-40, Glu-61, Asp-85, and Asn-105.

It belongs to the class I-like SAM-binding methyltransferase superfamily. rRNA adenine N(6)-methyltransferase family. RsmA subfamily.

The protein resides in the cytoplasm. It carries out the reaction adenosine(1518)/adenosine(1519) in 16S rRNA + 4 S-adenosyl-L-methionine = N(6)-dimethyladenosine(1518)/N(6)-dimethyladenosine(1519) in 16S rRNA + 4 S-adenosyl-L-homocysteine + 4 H(+). Specifically dimethylates two adjacent adenosines (A1518 and A1519) in the loop of a conserved hairpin near the 3'-end of 16S rRNA in the 30S particle. May play a critical role in biogenesis of 30S subunits. The protein is Ribosomal RNA small subunit methyltransferase A of Bacteroides thetaiotaomicron (strain ATCC 29148 / DSM 2079 / JCM 5827 / CCUG 10774 / NCTC 10582 / VPI-5482 / E50).